Reading from the N-terminus, the 339-residue chain is Heat-inducible transcription repressor HrcA (339 aa).

It belongs to the HrcA family.

Negative regulator of class I heat shock genes (grpE-dnaK-dnaJ and groELS operons). Prevents heat-shock induction of these operons. In Thiobacillus denitrificans (strain ATCC 25259 / T1), this protein is Heat-inducible transcription repressor HrcA.